We begin with the raw amino-acid sequence, 132 residues long: Fatty acid-binding protein, adipocyte (132 aa).

N-acetylcysteine is present on Cys-2. Ser-13 is modified (phosphoserine). A Phosphotyrosine; by Tyr-kinases modification is found at Tyr-20. The Nuclear localization signal signature appears at 22 to 32; sequence KEVGVGFATRK. An a fatty acid-binding site is contributed by 127–129; the sequence is RVY.

Belongs to the calycin superfamily. Fatty-acid binding protein (FABP) family. As to quaternary structure, monomer. Homodimer. Interacts with PPARG.

The protein localises to the cytoplasm. It localises to the nucleus. Its function is as follows. Lipid transport protein in adipocytes. Binds both long chain fatty acids and retinoic acid. Delivers long-chain fatty acids and retinoic acid to their cognate receptors in the nucleus. The sequence is that of Fatty acid-binding protein, adipocyte (FABP4) from Cervus elaphus (Red deer).